The chain runs to 249 residues: Homeobox-leucine zipper protein HOX6 (249 aa).

The segment at 1–32 (MDGEEDSEWMMMDVGGKGGKGGGGGGAADRKK) is disordered. Gly residues predominate over residues 15–27 (GGKGGKGGGGGGA). Residues 27–86 (AADRKKRFSEEQIKSLESMFATQTKLEPRQKLQLARELGLQPRQVAIWFQNKRARWKSKQ) constitute a DNA-binding region (homeobox). A leucine-zipper region spans residues 85–129 (KQLEREYSALRDDYDALLCSYESLKKEKLALIKQLEKLAEMLQEP). A disordered region spans residues 194–249 (FLRPSSQHHPPPPHAGAGFTSSEPAADHQSFNFHSSWPSSTEQTCSSTPWWEFESE). Polar residues predominate over residues 212–242 (FTSSEPAADHQSFNFHSSWPSSTEQTCSSTP).

The protein belongs to the HD-ZIP homeobox family. Class I subfamily. Expressed in seedlings, roots, leaves, nodes, internodes, flowers and embryo.

The protein localises to the nucleus. In terms of biological role, probable transcription factor that binds to the DNA sequence 5'-CAAT[AT]ATTG-3'. The protein is Homeobox-leucine zipper protein HOX6 (HOX6) of Oryza sativa subsp. indica (Rice).